The primary structure comprises 320 residues: rRNA 2'-O-methyltransferase fibrillarin 2 (320 aa).

The segment at M1 to K79 is disordered. Gly residues-rich tracts occupy residues G7–G44 and P57–G76. S-adenosyl-L-methionine contacts are provided by residues T167 to T168, E186 to F187, D211 to A212, and D231 to Q234.

It belongs to the methyltransferase superfamily. Fibrillarin family. In terms of assembly, component of box C/D small nucleolar ribonucleoprotein (snoRNP) particles. Interacts with groundnut rosette virus long-distance movement protein; this interaction is required for virus long-distance movement protein transiting through host Cajal body and nucleolus, relocalization of fibrillarin to the cytoplasm, and in presence of viral RNA, leads to the formation of stable RNPs. Interacts (via GAR domain) with the hordeivirus TGB1 movement protein (via the first 82 amino acid residues). Interacts with PRMT11 and PRMT12. Interacts with MED19A. In terms of processing, methylated by PRMT11 and PRMT12. Expressed in roots and flowers. Expressed in leaves and stems. Expression levels decrease during aging.

It is found in the nucleus. It localises to the nucleolus. It carries out the reaction a ribonucleotide in rRNA + S-adenosyl-L-methionine = a 2'-O-methylribonucleotide in rRNA + S-adenosyl-L-homocysteine + H(+). The enzyme catalyses L-glutaminyl-[histone H2A] + S-adenosyl-L-methionine = N(5)-methyl-L-glutaminyl-[histone H2A] + S-adenosyl-L-homocysteine + H(+). Its function is as follows. S-adenosyl-L-methionine-dependent methyltransferase that has the ability to methylate both RNAs and proteins. Involved in pre-rRNA processing. Utilizes the methyl donor S-adenosyl-L-methionine to catalyze the site-specific 2'-hydroxyl methylation of ribose moieties in pre-ribosomal RNA. Site specificity is provided by a guide RNA that base pairs with the substrate. Methylation occurs at a characteristic distance from the sequence involved in base pairing with the guide RNA. Also acts as a protein methyltransferase by mediating methylation of 'Gln-105' of histone H2A (H2AQ105me), a modification that impairs binding of the FACT complex and is specifically present at 35S ribosomal DNA locus. Acts as a negative regulator of expression of immune responsive genes, including pathogenesis-related gene 1 (PR1), and of resistance against bacterial pathogen. Binds to MED19A, a positive regulator of PR1 expression, to repress the activator activity of MED19A. In response to the bacterial pathogen-associated molecular pattern (PAMP) elf18, associates with the long non-coding RNA (lncRNA) ELENA1 (At4g16355), and releases its repression of MED19A. Possesses ribonuclease activity toward rRNA in vitro. Binds phosphoinositides, phospholipids and phosphatidic acid in vitro. The chain is rRNA 2'-O-methyltransferase fibrillarin 2 from Arabidopsis thaliana (Mouse-ear cress).